The primary structure comprises 763 residues: Endoplasmic reticulum membrane sensor NFE2L1 (763 aa).

A helical; Signal-anchor for type II membrane protein transmembrane segment spans residues 7–24 (YLTEGLLQFTILLSLIGV). Positions 108 to 150 (DPEGSVSGSQPSSGLALESSSGLQDVTGPDNGVRESETEQGFS) are disordered. A compositionally biased stretch (low complexity) spans 116–131 (SQPSSGLALESSSGLQ). The tract at residues 180–188 (IFDYSHRQK) is cholesterol recognition/amino acid consensus (CRAC) region. N-linked (GlcNAc...) asparagine glycans are attached at residues Asn-338 and Asn-350. Positions 369-373 (SPEVE) are CPD. The N-linked (GlcNAc...) asparagine glycan is linked to Asn-413. Disordered regions lie at residues 460 to 523 (EEEF…DSET) and 585 to 604 (TLKK…QMSR). The short motif at 466–470 (DSGLS) is the Destruction motif element. Positions 466–514 (DSGLSLDSSHSPSSLSSSEGSSSSSSSSSSSSSSSASSSASSSFSEEGA) are enriched in low complexity. Ser-519 carries the post-translational modification Phosphoserine; by CK2. Residues 589–604 (GSKEKQADFLDKQMSR) are compositionally biased toward basic and acidic residues. Ser-590 is modified (phosphoserine; by PKA). Residues 645–708 (LIRDIRRRGK…RQMKQKVQSL (64 aa)) enclose the bZIP domain. The interval 647 to 666 (RDIRRRGKNKMAAQNCRKRK) is basic motif. The tract at residues 673–687 (LERDVEDLQRDKARL) is leucine-zipper. Residues 752-759 (RRQERKPK) carry the Nuclear localization signal motif.

Belongs to the bZIP family. CNC subfamily. Interacts with KEAP1. As to quaternary structure, interacts (via CPD region) with FBXW7; leading to its ubiquitination and degradation. Interacts with SYVN1/HRD1; leading to its ubiquitination and degradation. Interacts (when ubiquitinated) with DDI2; leading to its cleavage. In terms of assembly, interacts (via the bZIP domain) with small MAF protein (MAFF, MAFG or MAFK); required for binding to antioxidant response elements (AREs) on DNA. Interacts (via Destruction motif) with BTRC; leading to its ubiquitination and degradation. Interacts with CEBPB; the heterodimer represses expression of DSPP during odontoblast differentiation. Interacts with MOTS-c, a peptide produced by the mitochondrially encoded 12S rRNA MT-RNR1. Cleaved at Leu-104 by the aspartyl protease DDI2 following retrotranslocation, releasing the protein from the endoplasmic reticulum membrane and forming the transcription factor NRF1 that translocates into the nucleus. Ubiquitination is prerequisite for cleavage by aspartyl protease DDI2. In terms of processing, N-glycosylated in normal conditions, when it has a single-pass type II membrane protein topology, with the DNA-binding domain facing the endoplasmic reticulum lumen. Deglycosylated during retrotranslocation to the cytosolic side of the membrane, to have a single-pass type III membrane protein topology with the major part of the protein facing the cytosol. Post-translationally, ubiquitinated by the SCF(FBXW7) complex and SYVN1/HRD1, leading to its degradation by the proteasome. Ubiquitinated during retrotranslocation to the cytosolic side of the membrane: ubiquitination does not lead to degradation and is required for processing by the aspartyl protease DDI2 and subsequent release from the endoplasmic reticulum membrane. Phosphorylation by CK2 at Ser-519 inhibits transcription factor activity, possibly by affecting DNA-binding activity. Phosphorylation at Ser-590 is required for interaction with CEBPB. In terms of processing, ubiquitinated by the SCF(BTRC) complex in the nucleus, leading to its degradation by the proteasome.

The protein localises to the endoplasmic reticulum membrane. It localises to the nucleus. Its function is as follows. Endoplasmic reticulum membrane sensor that translocates into the nucleus in response to various stresses to act as a transcription factor. Constitutes a precursor of the transcription factor NRF1. Able to detect various cellular stresses, such as cholesterol excess, oxidative stress or proteasome inhibition. In response to stress, it is released from the endoplasmic reticulum membrane following cleavage by the protease DDI2 and translocates into the nucleus to form the transcription factor NRF1. Acts as a key sensor of cholesterol excess: in excess cholesterol conditions, the endoplasmic reticulum membrane form of the protein directly binds cholesterol via its CRAC motif, preventing cleavage and release of the transcription factor NRF1, thereby allowing expression of genes promoting cholesterol removal, such as CD36. Involved in proteasome homeostasis: in response to proteasome inhibition, it is released from the endoplasmic reticulum membrane, translocates to the nucleus and activates expression of genes encoding proteasome subunits. In terms of biological role, CNC-type bZIP family transcription factor that translocates to the nucleus and regulates expression of target genes in response to various stresses. Heterodimerizes with small-Maf proteins (MAFF, MAFG or MAFK) and binds DNA motifs including the antioxidant response elements (AREs), which regulate expression of genes involved in oxidative stress response. Activates or represses expression of target genes, depending on the context. Plays a key role in cholesterol homeostasis by acting as a sensor of cholesterol excess: in low cholesterol conditions, translocates into the nucleus and represses expression of genes involved in defense against cholesterol excess, such as CD36. In excess cholesterol conditions, the endoplasmic reticulum membrane form of the protein directly binds cholesterol via its CRAC motif, preventing cleavage and release of the transcription factor NRF1, thereby allowing expression of genes promoting cholesterol removal. Critical for redox balance in response to oxidative stress: acts by binding the AREs motifs on promoters and mediating activation of oxidative stress response genes, such as GCLC, GCLM, GSS, MT1 and MT2. Plays an essential role during fetal liver hematopoiesis: probably has a protective function against oxidative stress and is involved in lipid homeostasis in the liver. Involved in proteasome homeostasis: in response to proteasome inhibition, mediates the 'bounce-back' of proteasome subunits by translocating into the nucleus and activating expression of genes encoding proteasome subunits. Also involved in regulating glucose flux. Together with CEBPB; represses expression of DSPP during odontoblast differentiation. In response to ascorbic acid induction, activates expression of SP7/Osterix in osteoblasts. The protein is Endoplasmic reticulum membrane sensor NFE2L1 of Bos taurus (Bovine).